A 1497-amino-acid polypeptide reads, in one-letter code: Collagen alpha-2(V) chain (1497 aa).

Residues 1–26 form the signal peptide; it reads MMANWVGARPLLILSVLLGYCVSIKA. The VWFC domain occupies 38-96; it reads IACTQHGQMYLNRDIWKPSPCQICVCDNGAILCDKIECPEVLNCANPITPTGECCPVCP. Residues 103–1265 are disordered; the sequence is TSFGRGRKGQ…PDDTNKTDPG (1163 aa). Residues 141-143 carry the Cell attachment site motif; sequence RGD. The segment covering 155-164 has biased composition (low complexity); it reads PQGIDGEPGV. The segment covering 168–180 has biased composition (pro residues); the sequence is PGAPGPPGHPSHP. A compositionally biased stretch (low complexity) spans 210–225; sequence PGSVGPVGPRGPQGLQ. Positions 234 to 246 are enriched in pro residues; sequence AGPPGEPGEPGPM. Residues Pro-288, Pro-291, and Pro-294 each carry the 4-hydroxyproline modification. 2 stretches are compositionally biased toward low complexity: residues 320–338 and 425–441; these read EAGP…PRGM and TPGA…SGPP. The short motif at 504–506 is the Cell attachment site element; the sequence is RGD. A compositionally biased stretch (gly residues) spans 550 to 559; the sequence is GPKGGQGDPG. Residues 602-611 are compositionally biased toward low complexity; sequence SIGIRGQPGS. 4-hydroxyproline occurs at positions 609 and 615. Residues 708–719 are compositionally biased toward basic and acidic residues; it reads RGERGNPGERGE. A compositionally biased stretch (gly residues) spans 730-739; the sequence is GMAGGHGPDG. A compositionally biased stretch (low complexity) spans 744–756; it reads PGPTGTIGDTGPP. Positions 774 to 785 are enriched in basic and acidic residues; it reads KGDRGGIGEKGA. 2 stretches are compositionally biased toward low complexity: residues 824–839 and 878–891; these read PPGS…ENGP and LAGS…HGVP. Gly residues predominate over residues 892–901; the sequence is GLKGGRGTQG. Residues 917-927 show a composition bias toward pro residues; the sequence is PPGPAGAPGPA. 3 consecutive short sequence motifs (cell attachment site) follow at residues 942 to 944, 1065 to 1067, and 1068 to 1070; these read RGD. Residues 1061–1070 are compositionally biased toward basic and acidic residues; it reads AVGERGDRGD. Residues 1091 to 1112 are compositionally biased toward low complexity; the sequence is APGDAGQRGEPGSRGPVGPPGR. 2 short sequence motifs (cell attachment site) span residues 1125–1127 and 1134–1136; these read RGD. A compositionally biased stretch (basic and acidic residues) spans 1125 to 1139; the sequence is RGDKGDNGDRGDRGQ. Composition is skewed to pro residues over residues 1169–1179 and 1209–1224; these read PFGPRGPPGPV and EGPP…PGPP. Residues 1228-1497 constitute a propeptide, C-terminal propeptide; sequence TAALGDIMGH…GLDIGPVCFM (270 aa). N-linked (GlcNAc...) asparagine glycosylation is present at Asn-1260. The region spanning 1264-1497 is the Fibrillar collagen NC1 domain; sequence PGIHVTLKSL…GLDIGPVCFM (234 aa). 3 disulfide bridges follow: Cys-1294–Cys-1326, Cys-1334–Cys-1495, and Cys-1403–Cys-1448. Ca(2+) contacts are provided by Asp-1312, Asn-1314, Gln-1315, and Asp-1320. The N-linked (GlcNAc...) asparagine glycan is linked to Asn-1398.

This sequence belongs to the fibrillar collagen family. As to quaternary structure, trimers of two alpha 1(V) and one alpha 2(V) chains expressed in most tissues and trimers of one alpha 1(V), one alpha 2(V), and one alpha 3(V) chains with a more limited distribution of expression. Prolines at the third position of the tripeptide repeating unit (G-X-P) are hydroxylated in some or all of the chains. Probably 3-hydroxylated on prolines by LEPREL1. Post-translationally, hydroxylation on proline residues within the sequence motif, GXPG, is most likely to be 4-hydroxy as this fits the requirement for 4-hydroxylation in vertebrates.

It localises to the secreted. The protein localises to the extracellular space. It is found in the extracellular matrix. Its function is as follows. Type V collagen is a member of group I collagen (fibrillar forming collagen). It is a minor connective tissue component of nearly ubiquitous distribution. Type V collagen binds to DNA, heparan sulfate, thrombospondin, heparin, and insulin. Type V collagen is a key determinant in the assembly of tissue-specific matrices. The polypeptide is Collagen alpha-2(V) chain (Mus musculus (Mouse)).